A 262-amino-acid chain; its full sequence is 1-(5-phosphoribosyl)-5-[(5-phosphoribosylamino)methylideneamino] imidazole-4-carboxamide isomerase (262 aa).

Catalysis depends on aspartate 8, which acts as the Proton acceptor. Aspartate 129 serves as the catalytic Proton donor. The interval 243–262 (KDNVGQEDHSLPRCEPGPRG) is disordered.

This sequence belongs to the HisA/HisF family.

The protein localises to the cytoplasm. It catalyses the reaction 1-(5-phospho-beta-D-ribosyl)-5-[(5-phospho-beta-D-ribosylamino)methylideneamino]imidazole-4-carboxamide = 5-[(5-phospho-1-deoxy-D-ribulos-1-ylimino)methylamino]-1-(5-phospho-beta-D-ribosyl)imidazole-4-carboxamide. It participates in amino-acid biosynthesis; L-histidine biosynthesis; L-histidine from 5-phospho-alpha-D-ribose 1-diphosphate: step 4/9. The sequence is that of 1-(5-phosphoribosyl)-5-[(5-phosphoribosylamino)methylideneamino] imidazole-4-carboxamide isomerase from Desulforudis audaxviator (strain MP104C).